Here is a 352-residue protein sequence, read N- to C-terminus: Iron-sulfur cluster carrier protein (352 aa).

Residue 114–121 (GKGGVGKS) coordinates ATP.

This sequence belongs to the Mrp/NBP35 ATP-binding proteins family. As to quaternary structure, homodimer. Interacts with BrxC.

In terms of biological role, binds and transfers iron-sulfur (Fe-S) clusters to target apoproteins. Can hydrolyze ATP. Negatively regulates the expression of hpr/scoC. The effect on hpr/scoC may be indirect. This is Iron-sulfur cluster carrier protein (salA) from Bacillus subtilis (strain 168).